We begin with the raw amino-acid sequence, 334 residues long: Glyceraldehyde-3-phosphate dehydrogenase 2 (334 aa).

Residues 12–13 (RI), aspartate 35, and arginine 79 each bind NAD(+). Residues 152–154 (SCT), threonine 183, arginine 198, 211–212 (SG), and arginine 234 contribute to the D-glyceraldehyde 3-phosphate site. Cysteine 153 functions as the Nucleophile in the catalytic mechanism. Asparagine 315 contributes to the NAD(+) binding site.

It belongs to the glyceraldehyde-3-phosphate dehydrogenase family. Homotetramer.

It is found in the cytoplasm. The enzyme catalyses D-glyceraldehyde 3-phosphate + phosphate + NAD(+) = (2R)-3-phospho-glyceroyl phosphate + NADH + H(+). It functions in the pathway carbohydrate degradation; glycolysis; pyruvate from D-glyceraldehyde 3-phosphate: step 1/5. Inhibited by pentalenolactone (PL). Catalyzes the oxidative phosphorylation of glyceraldehyde 3-phosphate (G3P) to 1,3-bisphosphoglycerate (BPG) using the cofactor NAD. The first reaction step involves the formation of a hemiacetal intermediate between G3P and a cysteine residue, and this hemiacetal intermediate is then oxidized to a thioester, with concomitant reduction of NAD to NADH. The reduced NADH is then exchanged with the second NAD, and the thioester is attacked by a nucleophilic inorganic phosphate to produce BPG. The sequence is that of Glyceraldehyde-3-phosphate dehydrogenase 2 (gap2) from Streptomyces arenae.